Consider the following 83-residue polypeptide: UPF0729 protein CBG02799 (83 aa).

A disordered region spans residues 51 to 83; sequence QEKKEEEEEKEKSCCSTEAENTTEVTTETKKDQ. Over residues 67 to 76 the composition is skewed to low complexity; that stretch reads TEAENTTEVT.

This sequence belongs to the UPF0729 family.

This chain is UPF0729 protein CBG02799, found in Caenorhabditis briggsae.